The sequence spans 273 residues: Kit ligand (273 aa).

The first 25 residues, 1-25 (MKKTQTWILTCIYLQLLLFNPLVKT), serve as a signal peptide directing secretion. The Extracellular segment spans residues 26 to 214 (EGICRNRVTN…KNPPGDSSLH (189 aa)). 2 disulfide bridges follow: Cys-29/Cys-114 and Cys-68/Cys-163. N-linked (GlcNAc...) asparagine; partial glycosylation is found at Asn-90 and Asn-118. Asn-145 is a glycosylation site (N-linked (GlcNAc...) asparagine). Residue Ser-167 is glycosylated (O-linked (GalNAc...) serine). Thr-168 and Thr-180 each carry an O-linked (GalNAc...) threonine glycan. The N-linked (GlcNAc...) asparagine glycan is linked to Asn-195. A helical membrane pass occupies residues 215 to 237 (WAAMALPALFSLIIGFAFGALYW). Residues 238–273 (KKRQPSLTRAVENIQINEEDNEISMLQEKEREFQEV) are Cytoplasmic-facing.

The protein belongs to the SCF family. In terms of assembly, homodimer, non-covalently linked. Heterotetramer with KIT, binding two KIT molecules; thereby mediates KIT dimerization and subsequent activation by autophosphorylation. In terms of processing, a soluble form (sKITLG) is produced by proteolytic processing of isoform 1 in the extracellular domain. Found in two differentially glycosylated forms, LMW-SCF and HMW-SCF. LMW-SCF is fully N-glycosylated at Asn-145, partially N-glycosylated at Asn-90, O-glycosylated at Ser-167, Thr-168 and Thr-180, and not glycosylated at Asn-97 or Asn-118. HMW-SCF is N-glycosylated at Asn-118, Asn-90 and Asn-145, O-glycosylated at Ser-167, Thr-168 and Thr-180, and not glycosylated at Asn-97. Post-translationally, a soluble form exists as a cleavage product of the extracellular domain.

Its subcellular location is the cell membrane. The protein resides in the cytoplasm. It localises to the cytoskeleton. It is found in the cell projection. The protein localises to the lamellipodium. Its subcellular location is the filopodium. The protein resides in the secreted. Functionally, ligand for the receptor-type protein-tyrosine kinase KIT. Plays an essential role in the regulation of cell survival and proliferation, hematopoiesis, stem cell maintenance, gametogenesis, mast cell development, migration and function, and in melanogenesis. KITLG/SCF binding can activate several signaling pathways. Promotes phosphorylation of PIK3R1, the regulatory subunit of phosphatidylinositol 3-kinase, and subsequent activation of the kinase AKT1. KITLG/SCF and KIT also transmit signals via GRB2 and activation of RAS, RAF1 and the MAP kinases MAPK1/ERK2 and/or MAPK3/ERK1. KITLG/SCF and KIT promote activation of STAT family members STAT1, STAT3 and STAT5. KITLG/SCF and KIT promote activation of PLCG1, leading to the production of the cellular signaling molecules diacylglycerol and inositol 1,4,5-trisphosphate. KITLG/SCF acts synergistically with other cytokines, probably interleukins. The polypeptide is Kit ligand (Homo sapiens (Human)).